The following is a 277-amino-acid chain: Bis(5'-nucleosyl)-tetraphosphatase, symmetrical (277 aa).

The protein belongs to the Ap4A hydrolase family.

The enzyme catalyses P(1),P(4)-bis(5'-adenosyl) tetraphosphate + H2O = 2 ADP + 2 H(+). Its function is as follows. Hydrolyzes diadenosine 5',5'''-P1,P4-tetraphosphate to yield ADP. This is Bis(5'-nucleosyl)-tetraphosphatase, symmetrical from Chromobacterium violaceum (strain ATCC 12472 / DSM 30191 / JCM 1249 / CCUG 213 / NBRC 12614 / NCIMB 9131 / NCTC 9757 / MK).